The following is a 166-amino-acid chain: MAQRLLLRRFLTSIISGKPSQSRWAPVASRALQTPQYSPGYLTVTPSQARSIYTTRVCSTTFNIQDGPDFQDRVVNSETPVVVDFHAQWCGPCKILGPRLEKVVAKQHGKVVMAKVDIDDHTDLALEYEVSAVPTVLAMKNGDVVDKFVGIKDEDQLEAFLKKLIG.

A mitochondrion-targeting transit peptide spans M1–S59. Residues T61–G166 form the Thioredoxin domain. Catalysis depends on nucleophile residues C90 and C93. A disulfide bond links C90 and C93. K152 carries the post-translational modification N6-acetyllysine; alternate. At K152 the chain carries N6-succinyllysine; alternate.

The protein belongs to the thioredoxin family. In terms of assembly, monomer.

Its subcellular location is the mitochondrion. In terms of biological role, important for the control of mitochondrial reactive oxygen species homeostasis, apoptosis regulation and cell viability. Is involved in various redox reactions including the reduction of protein disulfide bonds, through the reversible oxidation of its active center dithiol to a disulfide. The protein is Thioredoxin, mitochondrial (TXN2) of Bos taurus (Bovine).